The following is a 526-amino-acid chain: Bifunctional purine biosynthesis protein PurH (526 aa).

One can recognise an MGS-like domain in the interval 1-147 (MPSIKRALIS…KNWKHVAIVT (147 aa)).

This sequence belongs to the PurH family.

It carries out the reaction (6R)-10-formyltetrahydrofolate + 5-amino-1-(5-phospho-beta-D-ribosyl)imidazole-4-carboxamide = 5-formamido-1-(5-phospho-D-ribosyl)imidazole-4-carboxamide + (6S)-5,6,7,8-tetrahydrofolate. It catalyses the reaction IMP + H2O = 5-formamido-1-(5-phospho-D-ribosyl)imidazole-4-carboxamide. The protein operates within purine metabolism; IMP biosynthesis via de novo pathway; 5-formamido-1-(5-phospho-D-ribosyl)imidazole-4-carboxamide from 5-amino-1-(5-phospho-D-ribosyl)imidazole-4-carboxamide (10-formyl THF route): step 1/1. It participates in purine metabolism; IMP biosynthesis via de novo pathway; IMP from 5-formamido-1-(5-phospho-D-ribosyl)imidazole-4-carboxamide: step 1/1. The sequence is that of Bifunctional purine biosynthesis protein PurH from Neisseria meningitidis serogroup C / serotype 2a (strain ATCC 700532 / DSM 15464 / FAM18).